Reading from the N-terminus, the 351-residue chain is Phosphate acyltransferase (351 aa).

The protein belongs to the PlsX family. As to quaternary structure, homodimer. Probably interacts with PlsY.

It localises to the cytoplasm. It catalyses the reaction a fatty acyl-[ACP] + phosphate = an acyl phosphate + holo-[ACP]. It functions in the pathway lipid metabolism; phospholipid metabolism. Functionally, catalyzes the reversible formation of acyl-phosphate (acyl-PO(4)) from acyl-[acyl-carrier-protein] (acyl-ACP). This enzyme utilizes acyl-ACP as fatty acyl donor, but not acyl-CoA. The polypeptide is Phosphate acyltransferase (Paramagnetospirillum magneticum (strain ATCC 700264 / AMB-1) (Magnetospirillum magneticum)).